Consider the following 208-residue polypeptide: Ribosomal RNA small subunit methyltransferase G (208 aa).

Residues Gly73, Leu78, Val124–Glu125, and Arg139 each bind S-adenosyl-L-methionine.

Belongs to the methyltransferase superfamily. RNA methyltransferase RsmG family.

Its subcellular location is the cytoplasm. It carries out the reaction guanosine(527) in 16S rRNA + S-adenosyl-L-methionine = N(7)-methylguanosine(527) in 16S rRNA + S-adenosyl-L-homocysteine. Its function is as follows. Specifically methylates the N7 position of guanine in position 527 of 16S rRNA. In Aeromonas salmonicida (strain A449), this protein is Ribosomal RNA small subunit methyltransferase G.